Consider the following 146-residue polypeptide: Histone H2A.1 (146 aa).

Residues 118 to 146 form a disordered region; it reads SPAAAEKEAKSPKKKTSTKSPKKKVAAKE. 2 consecutive short sequence motifs (SPKK motif) follow at residues 128-131 and 137-140; these read SPKK. Residues 129-146 show a composition bias toward basic residues; it reads PKKKTSTKSPKKKVAAKE.

The protein belongs to the histone H2A family. In terms of assembly, the nucleosome is a histone octamer containing two molecules each of H2A, H2B, H3 and H4 assembled in one H3-H4 heterotetramer and two H2A-H2B heterodimers. The octamer wraps approximately 147 bp of DNA. In terms of processing, phosphorylated within its C-terminal part, probably at the SPKK motifs. As to expression, expressed preferentially in meristematic tissues of young seedlings, in stigma and ovary but not in pollen.

It is found in the nucleus. The protein resides in the chromosome. Core component of nucleosome. Nucleosomes wrap and compact DNA into chromatin, limiting DNA accessibility to the cellular machineries which require DNA as a template. Histones thereby play a central role in transcription regulation, DNA repair, DNA replication and chromosomal stability. DNA accessibility is regulated via a complex set of post-translational modifications of histones, also called histone code, and nucleosome remodeling. The protein is Histone H2A.1 (H2A-9) of Triticum aestivum (Wheat).